The chain runs to 117 residues: Minor capsid protein VP2 (117 aa).

The protein belongs to the lagovirus VP2 protein family. In terms of assembly, homooligomer. The portal-like structure consists in 12 copies of VP2. Interacts with capsid protein VP1.

Its subcellular location is the virion. It is found in the host cytoplasm. In terms of biological role, minor structural protein that forms a portal-like structure at a unique three-fold axis of symmetry, following binding to the host receptor. The channel formed by VP2 may allow the delivery of the viral genome through the host endosomal membrane. This is Minor capsid protein VP2 from Oryctolagus cuniculus (Rabbit).